A 354-amino-acid polypeptide reads, in one-letter code: Guanine nucleotide-binding protein G(t) subunit alpha-3 (354 aa).

Residues 1–26 (MGIGISSESKESAKRSKELEKKLQED) are disordered. A lipid anchor (N-myristoyl glycine) is attached at glycine 2. Residues 8-26 (ESKESAKRSKELEKKLQED) show a composition bias toward basic and acidic residues. Positions 32–354 (RTVKLLLLGA…KENLKDCGLF (323 aa)) constitute a G-alpha domain. Residues 35 to 48 (KLLLLGAGESGKST) are G1 motif. GTP is bound by residues 40–47 (GAGESGKS), 175–181 (LHSRVKT), 200–204 (DVGGQ), 269–272 (NKKD), and alanine 326. Positions 47 and 181 each coordinate Mg(2+). A G2 motif region spans residues 173-181 (DVLHSRVKT). Residues 196 to 205 (FRMFDVGGQR) form a G3 motif region. Residues 265–272 (VLFLNKKD) are G4 motif. A G5 motif region spans residues 324 to 329 (TCATDT).

Belongs to the G-alpha family. G(i/o/t/z) subfamily. As to quaternary structure, g proteins are composed of 3 units; alpha, beta and gamma, respectively GNAT3, GNB1 and GNG13 for Gustducin heterotrimer for bitter taste transduction. The alpha chain contains the guanine nucleotide binding site. Component of the TAS2R14-GNAT3 complex, consisting of TAS2R14, GNAT3, GNB1 and GNG2; within the complex interacts with TAS2R14; this complex plays a role in the perception of bitterness. Gustducin heterotrimer may also be composed of GNAT3, GNB3 and GNG13. In terms of tissue distribution, expressed in epithelial cells of taste buds of the circumvallate, foliate and fungiform. Detected in various region of the respiratory track. Expressed also in spermatozoa.

The protein resides in the cytoplasm. In terms of biological role, guanine nucleotide-binding protein (G protein) alpha subunit playing a prominent role in bitter and sweet taste transduction as well as in umami (monosodium glutamate, monopotassium glutamate, and inosine monophosphate) taste transduction. The polypeptide is Guanine nucleotide-binding protein G(t) subunit alpha-3 (GNAT3) (Bos taurus (Bovine)).